Here is a 31-residue protein sequence, read N- to C-terminus: Cytochrome b6-f complex subunit 6 (31 aa).

A helical membrane pass occupies residues 4 to 24 (VISYLSLLFISFLFALTLFIV).

Belongs to the PetL family. The 4 large subunits of the cytochrome b6-f complex are cytochrome b6, subunit IV (17 kDa polypeptide, PetD), cytochrome f and the Rieske protein, while the 4 small subunits are PetG, PetL, PetM and PetN. The complex functions as a dimer.

The protein resides in the plastid. It is found in the chloroplast thylakoid membrane. In terms of biological role, component of the cytochrome b6-f complex, which mediates electron transfer between photosystem II (PSII) and photosystem I (PSI), cyclic electron flow around PSI, and state transitions. PetL is important for photoautotrophic growth as well as for electron transfer efficiency and stability of the cytochrome b6-f complex. In Chara vulgaris (Common stonewort), this protein is Cytochrome b6-f complex subunit 6.